We begin with the raw amino-acid sequence, 1659 residues long: Fatty acid synthase subunit alpha (1659 aa).

The tract at residues 114–139 (TQAQASGGAGTIAGAGSSTAPVTAPP) is disordered. One can recognise a Carrier domain in the interval 160-235 (AQAFEIVRTL…AALQKTFTGQ (76 aa)). At Ser-195 the chain carries O-(pantetheine 4'-phosphoryl)serine. The interval 588–826 (GRSVLITGAG…LCLMFNTMCS (239 aa)) is ketoreductase (KR) domain. Residues 1030–1575 (KQLLHEVLIQ…QKGAQTIVVH (546 aa)) enclose the Ketosynthase family 3 (KS3) domain. Catalysis depends on for beta-ketoacyl synthase activity residues Cys-1217, His-1458, and His-1499. The tract at residues 1631 to 1659 (ETLLDPTPPQTNVDDRVARSIVQQESAEP) is disordered.

Belongs to the thiolase-like superfamily. Fungal fatty acid synthetase subunit alpha family. [Alpha(6)beta(6)] hexamers of two multifunctional subunits (alpha and beta). Post-translationally, 4'-phosphopantetheine is transferred from CoA to a specific serine of the acyl carrier domain by the C-terminal PPT domain. This modification is essential for activity because fatty acids are bound in thioester linkage to the sulfhydryl of the prosthetic group.

The catalysed reaction is acetyl-CoA + n malonyl-CoA + 2n NADPH + 4n H(+) = a long-chain-acyl-CoA + n CoA + n CO2 + 2n NADP(+).. It carries out the reaction a fatty acyl-[ACP] + malonyl-[ACP] + H(+) = a 3-oxoacyl-[ACP] + holo-[ACP] + CO2. It catalyses the reaction a (3R)-hydroxyacyl-[ACP] + NADP(+) = a 3-oxoacyl-[ACP] + NADPH + H(+). It participates in secondary metabolite biosynthesis. Its function is as follows. Fatty acid synthase subunit alpha; part of the gene cluster that mediates the biosynthesis of aspercryptins, linear lipopeptides built from six amino acids including 2 highly unusual and nonproteogenic amino acids, 2-amino-octanoic acid (2aoa) and 2-amino-dodecanol (2adol). The core structure of aspercryptins is as follows: Ser/Ala-Thr-Ile/Val-2aoa-Asn-2adol. The first step of aspercryptin biosynthesis is the generation of the fatty acid precursors, octanoic and dodecanoic acids, by the FAS subunits atnF and atnM. The fatty acid precursors are likely transformed into the corresponding alpha-amino fatty acids in three steps. First, they are hydroxylated by the cytochrome P450 monooxygenase atnE, then oxidized to the corresponding alpha-keto acids by the NAD(P)-dependent oxidoreductase atnD, and finally converted to the alpha-amino fatty acids by the PLP-dependent aminotransferases atnH or atnJ. the alpha-amino fatty acids, 2-amino-octanoic and 2-amino-dodecanoic acids, are recognized, activated, and covalently tethered to the NRPS atnA by its fourth and sixth adenylation domains. The second module of atnA is the Thr module and contains an epimerase (E) domain responsible for the epimerization of Thr to D-allo-Thr. Additionally, despite atnA having only one epimerase domain, the first amino acid of aspercryptin A1 is D-Ser, suggesting that serine is either loaded directly as D-Ser on the first module or that the epimerase domain in the threonine module epimerizes both L-Ser and L-Thr. After condensation of the hexapeptide of aspercryptin, the C-terminal reductase (TE) domain might be involved in the reductive release and production of the aldehyde hexapeptide. Further reduction would generate aspercryptins. The variety of aspercryptins produced reflects the flexibility of the atnA NRPS, allowing incorporation of alanine instead of serine, valine for isoleucine, and a C10 fatty amino alcohol instead of the C12 version. AtnB seems to be involved in the selectivity for Ile versus Val by the third module. Moreover, type B, C and D aspercryptins have an additional N-terminal cichorine, acetyl and propionyl group respectively. The protein is Fatty acid synthase subunit alpha of Emericella nidulans (strain FGSC A4 / ATCC 38163 / CBS 112.46 / NRRL 194 / M139) (Aspergillus nidulans).